Reading from the N-terminus, the 428-residue chain is MLDIQFIREHADVVKESQRKRGESVELVDEVLRSDEVRRSSLKEFEAARAQQKEIGKKVAAAPADEKAKLIAATKELSQKVSEYKAAADAAAEEYTTAMWKLSNIVEPEAPEGGEDDYVVVKKVGQIRDFAAEGFEPKDHLTLGRGVAGIDMERGVKVGGSRFYFLRGQVARMQIAMLTMAVDQAEEHGFTLAITPTLVRPEVMRGTGFLNSHADEIYRLREPDDQYLVGTSEVALAGMHENEILNLENGPLRYCGWSSCYRREAGAAGKDTSGIIRVHQFDKVEMFVYAKQEDSYKEHEHLLAMEQEMLGKVEVPYRIIDTAAGDLGSSAARKFDCEAWVPTQGRYRELTSTSNCTEYQARRLNIRERMEDGNTRAVSTLNGTLATTRWLVAILENHQQKDGSIEIPKAMRPYMGGKEVIEPTKWEA.

Position 231 to 233 (231 to 233 (TSE)) interacts with L-serine. ATP-binding positions include 262–264 (RRE) and Val-278. Glu-285 contacts L-serine. 349–352 (ELTS) provides a ligand contact to ATP. Thr-384 is a binding site for L-serine.

This sequence belongs to the class-II aminoacyl-tRNA synthetase family. Type-1 seryl-tRNA synthetase subfamily. In terms of assembly, homodimer. The tRNA molecule binds across the dimer.

Its subcellular location is the cytoplasm. It carries out the reaction tRNA(Ser) + L-serine + ATP = L-seryl-tRNA(Ser) + AMP + diphosphate + H(+). The catalysed reaction is tRNA(Sec) + L-serine + ATP = L-seryl-tRNA(Sec) + AMP + diphosphate + H(+). It functions in the pathway aminoacyl-tRNA biosynthesis; selenocysteinyl-tRNA(Sec) biosynthesis; L-seryl-tRNA(Sec) from L-serine and tRNA(Sec): step 1/1. Functionally, catalyzes the attachment of serine to tRNA(Ser). Is also able to aminoacylate tRNA(Sec) with serine, to form the misacylated tRNA L-seryl-tRNA(Sec), which will be further converted into selenocysteinyl-tRNA(Sec). This Bifidobacterium adolescentis (strain ATCC 15703 / DSM 20083 / NCTC 11814 / E194a) protein is Serine--tRNA ligase.